The sequence spans 75 residues: DNA-directed RNA polymerase subunit epsilon (75 aa).

The protein belongs to the RNA polymerase subunit epsilon family. RNAP is composed of a core of 2 alpha, a beta and a beta' subunit. The core is associated with a delta subunit, and at least one of epsilon or omega. When a sigma factor is associated with the core the holoenzyme is formed, which can initiate transcription.

It carries out the reaction RNA(n) + a ribonucleoside 5'-triphosphate = RNA(n+1) + diphosphate. Functionally, a non-essential component of RNA polymerase (RNAP). This is DNA-directed RNA polymerase subunit epsilon from Lactobacillus johnsonii (strain CNCM I-12250 / La1 / NCC 533).